Consider the following 358-residue polypeptide: Ribosomal RNA-processing protein 8 (358 aa).

Positions 1–81 (MKPFEVPPWE…PQDSSDDDYE (81 aa)) are disordered. A compositionally biased stretch (basic residues) spans 30–44 (AKKKPKKKKPKKKKA). Ser-75 and Ser-76 each carry phosphoserine. The S-adenosyl-L-methionine site is built by His-185, Gly-220, Asp-238, and Cys-267.

This sequence belongs to the methyltransferase superfamily. RRP8 family.

The protein resides in the nucleus. The protein localises to the nucleolus. Functionally, probable methyltransferase required to silence rDNA. The sequence is that of Ribosomal RNA-processing protein 8 from Drosophila melanogaster (Fruit fly).